We begin with the raw amino-acid sequence, 574 residues long: Glycine--tRNA ligase (574 aa).

Substrate is bound by residues R96 and E162. ATP-binding positions include 194–196, 204–209, 327–328, and 450–453; these read RNE, IRLREF, EC, and GIDR. Substrate is bound at residue 209–213; sequence FTQAE. 446 to 450 serves as a coordination point for substrate; it reads EPSYG.

This sequence belongs to the class-II aminoacyl-tRNA synthetase family.

It is found in the cytoplasm. The enzyme catalyses tRNA(Gly) + glycine + ATP = glycyl-tRNA(Gly) + AMP + diphosphate. Functionally, catalyzes the attachment of glycine to tRNA(Gly). The sequence is that of Glycine--tRNA ligase from Methanococcus maripaludis (strain C6 / ATCC BAA-1332).